Consider the following 158-residue polypeptide: Putative tyrosine-protein phosphatase OCA1 (158 aa).

The 152-residue stretch at 7–158 folds into the Tyrosine-protein phosphatase domain; that stretch reads NYGMVEENFY…DEELVFGASY (152 aa). Cys99 functions as the Phosphocysteine intermediate in the catalytic mechanism.

It belongs to the protein-tyrosine phosphatase family.

The protein localises to the cytoplasm. The enzyme catalyses O-phospho-L-tyrosyl-[protein] + H2O = L-tyrosyl-[protein] + phosphate. Putative tyrosine-protein phosphatase required for protection against superoxide stress. The protein is Putative tyrosine-protein phosphatase OCA1 (OCA1) of Mycosarcoma maydis (Corn smut fungus).